A 295-amino-acid polypeptide reads, in one-letter code: Bifunctional protein FolD (295 aa).

NADP(+) contacts are provided by residues 166–168, serine 191, and isoleucine 232; that span reads GRS.

Belongs to the tetrahydrofolate dehydrogenase/cyclohydrolase family. In terms of assembly, homodimer.

It carries out the reaction (6R)-5,10-methylene-5,6,7,8-tetrahydrofolate + NADP(+) = (6R)-5,10-methenyltetrahydrofolate + NADPH. The catalysed reaction is (6R)-5,10-methenyltetrahydrofolate + H2O = (6R)-10-formyltetrahydrofolate + H(+). It participates in one-carbon metabolism; tetrahydrofolate interconversion. Functionally, catalyzes the oxidation of 5,10-methylenetetrahydrofolate to 5,10-methenyltetrahydrofolate and then the hydrolysis of 5,10-methenyltetrahydrofolate to 10-formyltetrahydrofolate. This chain is Bifunctional protein FolD, found in Rhodopseudomonas palustris (strain ATCC BAA-98 / CGA009).